The primary structure comprises 336 residues: Anthranilate phosphoribosyltransferase (336 aa).

5-phospho-alpha-D-ribose 1-diphosphate is bound by residues glycine 82, 85-86 (GD), threonine 90, 92-95 (NIST), 110-118 (KHGNRFASG), and serine 122. Glycine 82 contributes to the anthranilate binding site. Serine 94 lines the Mg(2+) pocket. Asparagine 113 is an anthranilate binding site. Arginine 168 is an anthranilate binding site. Residues aspartate 227 and glutamate 228 each contribute to the Mg(2+) site.

The protein belongs to the anthranilate phosphoribosyltransferase family. In terms of assembly, homodimer. It depends on Mg(2+) as a cofactor.

It catalyses the reaction N-(5-phospho-beta-D-ribosyl)anthranilate + diphosphate = 5-phospho-alpha-D-ribose 1-diphosphate + anthranilate. Its pathway is amino-acid biosynthesis; L-tryptophan biosynthesis; L-tryptophan from chorismate: step 2/5. Its function is as follows. Catalyzes the transfer of the phosphoribosyl group of 5-phosphorylribose-1-pyrophosphate (PRPP) to anthranilate to yield N-(5'-phosphoribosyl)-anthranilate (PRA). The polypeptide is Anthranilate phosphoribosyltransferase (Desulfitobacterium hafniense (strain DSM 10664 / DCB-2)).